Consider the following 152-residue polypeptide: UPF0266 membrane protein YobD (152 aa).

3 consecutive transmembrane segments (helical) span residues 6 to 26 (LVLILFIAALLAFAIYDQFIM), 45 to 65 (IDSVIFVGLIVILIYNNVTNH), and 67 to 87 (ALITTWLLSALALMGFYIFWI).

It belongs to the UPF0266 family.

Its subcellular location is the cell inner membrane. This is UPF0266 membrane protein YobD from Shigella dysenteriae serotype 1 (strain Sd197).